Reading from the N-terminus, the 403-residue chain is Leu/Ile/Val-binding protein homolog 8 (403 aa).

An N-terminal signal peptide occupies residues 1–26 (MRLSRLLIGASLGVALSSTVFTAALA).

This sequence belongs to the leucine-binding protein family.

Functionally, component of an amino-acid transport system. The chain is Leu/Ile/Val-binding protein homolog 8 from Brucella abortus (strain 2308).